The chain runs to 163 residues: Small ribosomal subunit protein uS9 (163 aa).

Positions 1-25 are enriched in low complexity; it reads MAENTNNSAVTETEETTAAFTTETN. Residues 1 to 40 form a disordered region; it reads MAENTNNSAVTETEETTAAFTTETNSGAGTGTSTIAPGYG.

The protein belongs to the universal ribosomal protein uS9 family.

In Bifidobacterium animalis subsp. lactis (strain AD011), this protein is Small ribosomal subunit protein uS9.